The sequence spans 294 residues: RAB7A-interacting MON1-CCZ1 complex subunit 1 (294 aa).

An N-acetylalanine modification is found at A2.

The protein belongs to the RIMOC1 family. As to quaternary structure, interacts with the MON1A-CCZ1B complex. Interacts with GDP-bound RAB7A and promotes its interaction with the MON1A-CCZ1B complex.

It is found in the cytoplasm. The protein localises to the cytosol. Plays an important role in the removal of damaged mitochondria via mitophagy by controlling the stability and localization of RAB7A. Required for the recruitment of RAB7A and ATG9A vesicles to damaged mitochondria and promotes the stability of RAB7A by inhibiting its proteasomal degradation during mitophagy. This chain is RAB7A-interacting MON1-CCZ1 complex subunit 1, found in Mus musculus (Mouse).